The sequence spans 497 residues: MQQKTDVILIGAGIMSATLGSLLKELAPEWEIKVFEKLASAGEESSNEWNNAGTGHSALCELNYTSEKADGSIDISKAVKVNEQFQLSRQFWAYLVKSKLIRNPQDFIMPLPHMSLVQGKKNVEFLKNRFEALSKNPLFQGMEFSDAPETLKKWLPLIMEGRTSNEPMAATKIDSGTDVNFGALTRMLFDYLKTKNVELNYKHSVENIKRTKNGLWEVKVHDMNSGKIEHHTAKFVFIGGGGGSLPLLQKTGIPESKHIGGFPVSGLFMVCKNQKVVEQHHAKVYGKAKVGAPPMSVPHLDTRYIDNKKALLFGPFAGFSPKFLKTGSNLDLIGSVKPNNVLTMLAAGVKEMGLTKYLIQQVMLSHEKRMLDFPAFIPNAKSEDWDIVVAGQRVQVIKDTDAGGKGTLQFGTEVVSAADGSIAALLGASPGASTAVHVMLEVLEKCFPSRMIEWEEKIKEMIPSYGISLTENPRLFQDLHTSTGRTLGLNEKETVHN.

Belongs to the MQO family. The cofactor is FAD.

The enzyme catalyses (S)-malate + a quinone = a quinol + oxaloacetate. It participates in carbohydrate metabolism; tricarboxylic acid cycle; oxaloacetate from (S)-malate (quinone route): step 1/1. The polypeptide is Probable malate:quinone oxidoreductase (Bacillus cereus (strain ATCC 14579 / DSM 31 / CCUG 7414 / JCM 2152 / NBRC 15305 / NCIMB 9373 / NCTC 2599 / NRRL B-3711)).